The following is a 108-amino-acid chain: MADPRVRQIKIKTGVVKRLVKEKVMYEKEAKQQEEKIEKMRAEDGENYAIKKQAEILQESRMMIPDCQRRLEAACTDLQQILESEKDLEEAEEYKEARLVLDSVKLEA.

N-acetylalanine is present on Ala-2.

The protein belongs to the TBCA family. As to quaternary structure, supercomplex made of cofactors A to E. Cofactors A and D function by capturing and stabilizing tubulin in a quasi-native conformation. Cofactor E binds to the cofactor D-tubulin complex; interaction with cofactor C then causes the release of tubulin polypeptides that are committed to the native state.

It localises to the cytoplasm. It is found in the cytoskeleton. Functionally, tubulin-folding protein; involved in the early step of the tubulin folding pathway. In Oryctolagus cuniculus (Rabbit), this protein is Tubulin-specific chaperone A (TBCA).